The chain runs to 456 residues: Chromosomal replication initiator protein DnaA (456 aa).

The tract at residues 1–83 (MTASLWQQCL…LRFDIGNRPH (83 aa)) is domain I, interacts with DnaA modulators. Residues 83–119 (HPVAIARAPARGAAPVNNLQKSWESKADAKPEPNHKS) form a domain II region. Positions 120–336 (NTNVNYTFEN…GALNRVIANA (217 aa)) are domain III, AAA+ region. ATP contacts are provided by Gly-164, Gly-166, Lys-167, and Thr-168. The tract at residues 337 to 456 (NFTGRAINID…YSNLIRTLSS (120 aa)) is domain IV, binds dsDNA.

This sequence belongs to the DnaA family. As to quaternary structure, oligomerizes as a right-handed, spiral filament on DNA at oriC.

It is found in the cytoplasm. In terms of biological role, plays an essential role in the initiation and regulation of chromosomal replication. ATP-DnaA binds to the origin of replication (oriC) to initiate formation of the DNA replication initiation complex once per cell cycle. Binds the DnaA box (a 9 base pair repeat at the origin) and separates the double-stranded (ds)DNA. Forms a right-handed helical filament on oriC DNA; dsDNA binds to the exterior of the filament while single-stranded (ss)DNA is stabiized in the filament's interior. The ATP-DnaA-oriC complex binds and stabilizes one strand of the AT-rich DNA unwinding element (DUE), permitting loading of DNA polymerase. After initiation quickly degrades to an ADP-DnaA complex that is not apt for DNA replication. Binds acidic phospholipids. This Aeromonas salmonicida (strain A449) protein is Chromosomal replication initiator protein DnaA.